Consider the following 239-residue polypeptide: tRNA (guanine-N(7)-)-methyltransferase (239 aa).

4 residues coordinate S-adenosyl-L-methionine: E69, E94, D121, and D144. Residue D144 is part of the active site. Substrate is bound by residues K148, D180, and 217-220; that span reads TKFE.

The protein belongs to the class I-like SAM-binding methyltransferase superfamily. TrmB family. In terms of assembly, monomer.

The catalysed reaction is guanosine(46) in tRNA + S-adenosyl-L-methionine = N(7)-methylguanosine(46) in tRNA + S-adenosyl-L-homocysteine. It participates in tRNA modification; N(7)-methylguanine-tRNA biosynthesis. Catalyzes the formation of N(7)-methylguanine at position 46 (m7G46) in tRNA. The chain is tRNA (guanine-N(7)-)-methyltransferase from Buchnera aphidicola subsp. Acyrthosiphon pisum (strain 5A).